Here is a 294-residue protein sequence, read N- to C-terminus: MRFVIVTGLSGAGKTQAIRSLEDLGFFCVDNLPPTLIPKFAEACYQTEGKIKKIALVIDIRGGKFFDDLFESLKYLKEEGYKYEILFLDASDEVLIKRFKESRRKHPLSPDGRILNGISMERNRLREVKDRADNIINTSELATRELREAINEIYGEHDQIENQLIITVLSFGFKHGIPLDSDLVFDVRFLPNPYYIKELKQYSGKDKKVSDYVMSFDVTNKFVNRLENMLDFLIPNYFKEGKRQLIISIGCTGGRHRSVAIANAIYEGLKSKGHKVNIDHRDINEDIHKGGKKL.

8–15 serves as a coordination point for ATP; it reads GLSGAGKT. 59–62 is a GTP binding site; that stretch reads DIRG.

It belongs to the RapZ-like family.

Functionally, displays ATPase and GTPase activities. This chain is Nucleotide-binding protein CLB_3433, found in Clostridium botulinum (strain ATCC 19397 / Type A).